Here is a 400-residue protein sequence, read N- to C-terminus: Aspartate aminotransferase (400 aa).

2 residues coordinate L-aspartate: Gly42 and Asn180. Lys241 carries the post-translational modification N6-(pyridoxal phosphate)lysine. Arg373 provides a ligand contact to L-aspartate.

It belongs to the class-I pyridoxal-phosphate-dependent aminotransferase family. As to quaternary structure, homodimer. It depends on pyridoxal 5'-phosphate as a cofactor.

It localises to the cytoplasm. It catalyses the reaction L-aspartate + 2-oxoglutarate = oxaloacetate + L-glutamate. The polypeptide is Aspartate aminotransferase (aspC) (Sulfolobus acidocaldarius (strain ATCC 33909 / DSM 639 / JCM 8929 / NBRC 15157 / NCIMB 11770)).